Here is a 343-residue protein sequence, read N- to C-terminus: GDSL esterase/lipase EXL6 (343 aa).

The first 21 residues, 1–21, serve as a signal peptide directing secretion; the sequence is MFRGKIFVLSLFSIYVLSSAA. Asn24 carries N-linked (GlcNAc...) asparagine glycosylation. Ser36 (nucleophile) is an active-site residue. Residues Asp318 and His321 contribute to the active site.

This sequence belongs to the 'GDSL' lipolytic enzyme family. In terms of tissue distribution, flower buds and pollen.

The protein resides in the secreted. It is found in the extracellular space. The protein localises to the extracellular matrix. Its subcellular location is the pollen coat. Functionally, required for the formation of pollen coats and male fertility. The protein is GDSL esterase/lipase EXL6 (EXL6) of Arabidopsis thaliana (Mouse-ear cress).